The sequence spans 327 residues: Melanoma-associated antigen B18 (327 aa).

Residues 1 to 19 (MPRGQKSKLRAREKRRQAR) show a composition bias toward basic residues. The disordered stretch occupies residues 1–85 (MPRGQKSKLR…SSDDSEDTED (85 aa)). The segment covering 46–70 (MPTSPNMPMGEQSTFSHSYTSTSDQ) has biased composition (polar residues). In terms of domain architecture, MAGE spans 91–289 (INHKVVLLVQ…DSFPTLYEAA (199 aa)).

Interacts with LNX1. Expressed in testis, stomach, large intestine, small intestine, spleen, lymph node, bone marrow lymphocytes and blood T-lymphocytes. Not detected in brain, heart, lung, liver or kidney (at protein level).

The protein localises to the cytoplasm. Its function is as follows. May enhance ubiquitin ligase activity of RING-type zinc finger-containing E3 ubiquitin-protein ligases. Proposed to act through recruitment and/or stabilization of the Ubl-conjugating enzyme (E2) at the E3:substrate complex. This chain is Melanoma-associated antigen B18, found in Mus musculus (Mouse).